The chain runs to 315 residues: Melanoma-associated antigen 9 (315 aa).

The span at 1 to 13 (MSLEQRSPHCKPD) shows a compositional bias: basic and acidic residues. Residues 1–67 (MSLEQRSPHC…PQSPQGGASS (67 aa)) are disordered. Positions 50-67 (SAAGSSSPPQSPQGGASS) are enriched in low complexity. Positions 108 to 307 (LKLKVAELVH…ICYPSLYEEV (200 aa)) constitute an MAGE domain.

As to expression, expressed in many tumors of several types, such as melanoma, head and neck squamous cell carcinoma, lung carcinoma and breast carcinoma, but not in normal tissues except for testes and placenta.

In terms of biological role, not known, though may play a role in embryonal development and tumor transformation or aspects of tumor progression. The polypeptide is Melanoma-associated antigen 9 (MAGEA9) (Homo sapiens (Human)).